A 294-amino-acid polypeptide reads, in one-letter code: Ribosomal protein L11 methyltransferase (294 aa).

S-adenosyl-L-methionine is bound by residues threonine 145, glycine 167, aspartate 189, and asparagine 230.

The protein belongs to the methyltransferase superfamily. PrmA family.

The protein localises to the cytoplasm. The enzyme catalyses L-lysyl-[protein] + 3 S-adenosyl-L-methionine = N(6),N(6),N(6)-trimethyl-L-lysyl-[protein] + 3 S-adenosyl-L-homocysteine + 3 H(+). Functionally, methylates ribosomal protein L11. The sequence is that of Ribosomal protein L11 methyltransferase from Alkalilimnicola ehrlichii (strain ATCC BAA-1101 / DSM 17681 / MLHE-1).